Reading from the N-terminus, the 122-residue chain is Large ribosomal subunit protein uL14 (122 aa).

Belongs to the universal ribosomal protein uL14 family. In terms of assembly, part of the 50S ribosomal subunit. Forms a cluster with proteins L3 and L19. In the 70S ribosome, L14 and L19 interact and together make contacts with the 16S rRNA in bridges B5 and B8.

Binds to 23S rRNA. Forms part of two intersubunit bridges in the 70S ribosome. The polypeptide is Large ribosomal subunit protein uL14 (Pelobacter propionicus (strain DSM 2379 / NBRC 103807 / OttBd1)).